A 190-amino-acid chain; its full sequence is Nodulation protein L (190 aa).

This sequence belongs to the transferase hexapeptide repeat family.

Acetyltransferase implicated in the O-acetylation of Nod factors. The sequence is that of Nodulation protein L (nodL) from Rhizobium leguminosarum bv. viciae.